The sequence spans 229 residues: Large ribosomal subunit protein uL1 (229 aa).

Belongs to the universal ribosomal protein uL1 family. In terms of assembly, part of the 50S ribosomal subunit.

Its function is as follows. Binds directly to 23S rRNA. The L1 stalk is quite mobile in the ribosome, and is involved in E site tRNA release. Functionally, protein L1 is also a translational repressor protein, it controls the translation of the L11 operon by binding to its mRNA. The sequence is that of Large ribosomal subunit protein uL1 from Streptococcus sanguinis (strain SK36).